The following is an 876-amino-acid chain: Valine--tRNA ligase (876 aa).

A 'HIGH' region motif is present at residues proline 43–histidine 53. A 'KMSKS' region motif is present at residues lysine 532–serine 536. Residue lysine 535 coordinates ATP. Coiled coils occupy residues glycine 805–glycine 826 and arginine 853–asparagine 875.

It belongs to the class-I aminoacyl-tRNA synthetase family. ValS type 1 subfamily. In terms of assembly, monomer.

Its subcellular location is the cytoplasm. The enzyme catalyses tRNA(Val) + L-valine + ATP = L-valyl-tRNA(Val) + AMP + diphosphate. In terms of biological role, catalyzes the attachment of valine to tRNA(Val). As ValRS can inadvertently accommodate and process structurally similar amino acids such as threonine, to avoid such errors, it has a 'posttransfer' editing activity that hydrolyzes mischarged Thr-tRNA(Val) in a tRNA-dependent manner. The polypeptide is Valine--tRNA ligase (Bacteroides fragilis (strain ATCC 25285 / DSM 2151 / CCUG 4856 / JCM 11019 / LMG 10263 / NCTC 9343 / Onslow / VPI 2553 / EN-2)).